Consider the following 153-residue polypeptide: UPF0260 protein Plav_0898 (153 aa).

Belongs to the UPF0260 family.

The protein is UPF0260 protein Plav_0898 of Parvibaculum lavamentivorans (strain DS-1 / DSM 13023 / NCIMB 13966).